Reading from the N-terminus, the 147-residue chain is Large ribosomal subunit protein uL15 (147 aa).

Residues 1–54 (MRLSDIKPTPGSMKKRTRVGRGIGSGKGKTSGKGHKGQKARGRGKVHPWFEGGQ) are disordered. The segment covering 30 to 46 (TSGKGHKGQKARGRGKV) has biased composition (basic residues).

This sequence belongs to the universal ribosomal protein uL15 family. As to quaternary structure, part of the 50S ribosomal subunit.

Its function is as follows. Binds to the 23S rRNA. The chain is Large ribosomal subunit protein uL15 from Thermosipho melanesiensis (strain DSM 12029 / CIP 104789 / BI429).